We begin with the raw amino-acid sequence, 230 residues long: Sperm-associated antigen 7 homolog (230 aa).

The interval 1–45 (MADLLGSILSSMEKPPTVHDQESRRKAREQAARLKKLEEDERRKK) is disordered. The span at 16–45 (PTVHDQESRRKAREQAARLKKLEEDERRKK) shows a compositional bias: basic and acidic residues. Residues 46 to 109 (AEFRKKMEKE…ESRYVMLFKK (64 aa)) enclose the R3H domain. Residues 119 to 144 (EAYRKGEEWDPQKAEERRRLKEKAAL) show a composition bias toward basic and acidic residues. Disordered stretches follow at residues 119-169 (EAYR…KYSH) and 185-230 (ANRA…GSSV). Ser-158 carries the post-translational modification Phosphoserine. Basic and acidic residues predominate over residues 196-211 (NKRDTRSIEEAMNEIR).

This is Sperm-associated antigen 7 homolog (spag7) from Danio rerio (Zebrafish).